A 105-amino-acid polypeptide reads, in one-letter code: Sulfite reductase, dissimilatory-type subunit gamma (105 aa).

This sequence belongs to the DsrC/TusE family. Heterohexamer of two alpha, two beta and two gamma subunits.

It is found in the cytoplasm. It catalyses the reaction [DsrC protein]-trisulfide + NAD(+) + 3 H2O = [DsrC protein]-dithiol + sulfite + NADH + 3 H(+). Its function is as follows. Catalyzes the reduction of sulfite to sulfide. This is the terminal oxidation reaction in sulfate respiration, a process catalyzed by the sulfate-reducing bacteria. The protein is Sulfite reductase, dissimilatory-type subunit gamma (dsvC) of Nitratidesulfovibrio vulgaris (strain ATCC 29579 / DSM 644 / CCUG 34227 / NCIMB 8303 / VKM B-1760 / Hildenborough) (Desulfovibrio vulgaris).